The following is a 190-amino-acid chain: Lipid A acyltransferase PagP (190 aa).

A signal peptide spans 1–18 (MKRLISCLTIICALNASA). Catalysis depends on residues histidine 60, aspartate 103, and serine 104.

Belongs to the lipid A palmitoyltransferase family. In terms of assembly, homodimer.

The protein localises to the cell outer membrane. The enzyme catalyses a lipid A + a 1,2-diacyl-sn-glycero-3-phosphocholine = a hepta-acyl lipid A + a 2-acyl-sn-glycero-3-phosphocholine. It carries out the reaction a lipid IVA + a 1,2-diacyl-sn-glycero-3-phosphocholine = a lipid IVB + a 2-acyl-sn-glycero-3-phosphocholine. It catalyses the reaction a lipid IIA + a 1,2-diacyl-sn-glycero-3-phosphocholine = a lipid IIB + a 2-acyl-sn-glycero-3-phosphocholine. In terms of biological role, transfers a fatty acid residue from the sn-1 position of a phospholipid to the N-linked hydroxyfatty acid chain on the proximal unit of lipid A or its precursors. This Legionella pneumophila subsp. pneumophila (strain Philadelphia 1 / ATCC 33152 / DSM 7513) protein is Lipid A acyltransferase PagP.